A 146-amino-acid polypeptide reads, in one-letter code: Small ribosomal subunit protein uS5 (146 aa).

The S5 DRBM domain occupies 8–71 (FEEVIVNIGR…DDAFKNIIDV (64 aa)).

Belongs to the universal ribosomal protein uS5 family. Part of the 30S ribosomal subunit. Contacts proteins S4 and S8.

Its function is as follows. With S4 and S12 plays an important role in translational accuracy. Functionally, located at the back of the 30S subunit body where it stabilizes the conformation of the head with respect to the body. This is Small ribosomal subunit protein uS5 from Campylobacter hominis (strain ATCC BAA-381 / DSM 21671 / CCUG 45161 / LMG 19568 / NCTC 13146 / CH001A).